We begin with the raw amino-acid sequence, 932 residues long: 3-hydroxy-3-methylglutaryl-coenzyme A reductase (932 aa).

6 helical membrane passes run 20–40 (VIVC…FTGL), 59–79 (LSSD…YLYL), 92–112 (ILGI…SAVI), 113–133 (HLFG…LLLI), 162–182 (MAIL…VISI), and 193–213 (VFCC…MTFF). An N-linked (GlcNAc...) asparagine glycan is attached at asparagine 279. Residues 322–342 (ILTAILATVLASHYIFFSDLA) form a helical membrane-spanning segment. Positions 343-467 (TYPEKRVSIM…APRPMPELLE (125 aa)) are linker. Basic and acidic residues predominate over residues 357–367 (VVNPGSDHEDA). Residues 357 to 442 (VVNPGSDHED…SGSEDEEEEV (86 aa)) are disordered. The segment covering 374–403 (GTLSSSPSTSDVRVIESMTSRTQACQTDPV) has biased composition (polar residues). Over residues 406-421 (SPRNSRSSSPVSSHSV) the composition is skewed to low complexity. The segment at 468 to 932 (ILNVGKGPNA…APGTCTANAS (465 aa)) is catalytic. Active-site charge relay system residues include glutamate 575, lysine 707, and aspartate 783. N-linked (GlcNAc...) asparagine glycosylation is present at asparagine 850. The active-site Proton donor is the histidine 882. N-linked (GlcNAc...) asparagine glycosylation is present at asparagine 886. Position 888 is a phosphoserine; by AMPK (serine 888).

Belongs to the HMG-CoA reductase family.

Its subcellular location is the endoplasmic reticulum membrane. It carries out the reaction (R)-mevalonate + 2 NADP(+) + CoA = (3S)-3-hydroxy-3-methylglutaryl-CoA + 2 NADPH + 2 H(+). It participates in metabolic intermediate biosynthesis; (R)-mevalonate biosynthesis; (R)-mevalonate from acetyl-CoA: step 3/3. In terms of biological role, this transmembrane glycoprotein is involved in the control of cholesterol biosynthesis. It is the rate-limiting enzyme of sterol biosynthesis. This Strongylocentrotus purpuratus (Purple sea urchin) protein is 3-hydroxy-3-methylglutaryl-coenzyme A reductase (HMGCR).